Reading from the N-terminus, the 397-residue chain is Formate-dependent phosphoribosylglycinamide formyltransferase (397 aa).

Residues 21–22 and E81 contribute to the N(1)-(5-phospho-beta-D-ribosyl)glycinamide site; that span reads EL. ATP-binding positions include R113, K154, 194-197, and E202; that span reads EEYV. In terms of domain architecture, ATP-grasp spans 118–313; that stretch reads KLAAEKVKVP…EFQIHVRSAL (196 aa). 2 residues coordinate Mg(2+): E272 and E284. N(1)-(5-phospho-beta-D-ribosyl)glycinamide-binding positions include D291, K361, and 368–369; that span reads RR.

It belongs to the PurK/PurT family. As to quaternary structure, homodimer.

It catalyses the reaction N(1)-(5-phospho-beta-D-ribosyl)glycinamide + formate + ATP = N(2)-formyl-N(1)-(5-phospho-beta-D-ribosyl)glycinamide + ADP + phosphate + H(+). Its pathway is purine metabolism; IMP biosynthesis via de novo pathway; N(2)-formyl-N(1)-(5-phospho-D-ribosyl)glycinamide from N(1)-(5-phospho-D-ribosyl)glycinamide (formate route): step 1/1. Functionally, involved in the de novo purine biosynthesis. Catalyzes the transfer of formate to 5-phospho-ribosyl-glycinamide (GAR), producing 5-phospho-ribosyl-N-formylglycinamide (FGAR). Formate is provided by PurU via hydrolysis of 10-formyl-tetrahydrofolate. This chain is Formate-dependent phosphoribosylglycinamide formyltransferase, found in Sulfurisphaera tokodaii (strain DSM 16993 / JCM 10545 / NBRC 100140 / 7) (Sulfolobus tokodaii).